The chain runs to 486 residues: Ribulose bisphosphate carboxylase large chain (486 aa).

Substrate-binding residues include Asn-126 and Thr-176. The active-site Proton acceptor is Lys-178. Substrate is bound at residue Lys-180. Residues Lys-204, Asp-206, and Glu-207 each contribute to the Mg(2+) site. Lys-204 is modified (N6-carboxylysine). Catalysis depends on His-296, which acts as the Proton acceptor. Residues Arg-297, His-329, and Ser-381 each coordinate substrate.

It belongs to the RuBisCO large chain family. Type I subfamily. As to quaternary structure, heterohexadecamer of 8 large chains and 8 small chains. Mg(2+) serves as cofactor.

It catalyses the reaction 2 (2R)-3-phosphoglycerate + 2 H(+) = D-ribulose 1,5-bisphosphate + CO2 + H2O. The enzyme catalyses D-ribulose 1,5-bisphosphate + O2 = 2-phosphoglycolate + (2R)-3-phosphoglycerate + 2 H(+). In terms of biological role, ruBisCO catalyzes two reactions: the carboxylation of D-ribulose 1,5-bisphosphate, the primary event in carbon dioxide fixation, as well as the oxidative fragmentation of the pentose substrate. Both reactions occur simultaneously and in competition at the same active site. The chain is Ribulose bisphosphate carboxylase large chain from Cupriavidus taiwanensis (strain DSM 17343 / BCRC 17206 / CCUG 44338 / CIP 107171 / LMG 19424 / R1) (Ralstonia taiwanensis (strain LMG 19424)).